Consider the following 484-residue polypeptide: UDP-N-acetylmuramate--L-alanine ligase (484 aa).

123-129 (GTHGKTT) lines the ATP pocket.

Belongs to the MurCDEF family.

The protein localises to the cytoplasm. The enzyme catalyses UDP-N-acetyl-alpha-D-muramate + L-alanine + ATP = UDP-N-acetyl-alpha-D-muramoyl-L-alanine + ADP + phosphate + H(+). It participates in cell wall biogenesis; peptidoglycan biosynthesis. In terms of biological role, cell wall formation. The chain is UDP-N-acetylmuramate--L-alanine ligase from Pseudomonas fluorescens (strain ATCC BAA-477 / NRRL B-23932 / Pf-5).